A 945-amino-acid polypeptide reads, in one-letter code: Isoleucine--tRNA ligase (945 aa).

The span at 1-10 shows a compositional bias: basic and acidic residues; it reads MSNKKADSKP. The tract at residues 1–21 is disordered; it reads MSNKKADSKPQAKYPVNLLDT. A 'HIGH' region motif is present at residues 66–76; that stretch reads PYANGDIHLGH. Glu581 contributes to the L-isoleucyl-5'-AMP binding site. The short motif at 622–626 is the 'KMSKS' region element; that stretch reads KMSKS. Lys625 contributes to the ATP binding site. Zn(2+) contacts are provided by Cys908, Cys911, Cys928, and Cys931.

This sequence belongs to the class-I aminoacyl-tRNA synthetase family. IleS type 1 subfamily. As to quaternary structure, monomer. Zn(2+) is required as a cofactor.

It localises to the cytoplasm. The enzyme catalyses tRNA(Ile) + L-isoleucine + ATP = L-isoleucyl-tRNA(Ile) + AMP + diphosphate. Its function is as follows. Catalyzes the attachment of isoleucine to tRNA(Ile). As IleRS can inadvertently accommodate and process structurally similar amino acids such as valine, to avoid such errors it has two additional distinct tRNA(Ile)-dependent editing activities. One activity is designated as 'pretransfer' editing and involves the hydrolysis of activated Val-AMP. The other activity is designated 'posttransfer' editing and involves deacylation of mischarged Val-tRNA(Ile). This is Isoleucine--tRNA ligase from Burkholderia multivorans (strain ATCC 17616 / 249).